A 771-amino-acid polypeptide reads, in one-letter code: Probable cation-transporting ATPase G (771 aa).

The HMA domain occupies 19–86 (GRMRVQATGF…AIIDAETVPA (68 aa)). The chain crosses the membrane as a helical span at residues 72–92 (AAILSAIIDAETVPAAAVPAY). A disordered region spans residues 122-143 (DVAAQPSGETSDACCDGEDNED). 5 helical membrane-spanning segments follow: residues 163–183 (VLLT…VVLG), 209–229 (VGVG…GELG), 330–350 (VFAG…ATAA), 387–407 (MIAA…LVWI), and 411–431 (LVVL…VTVV). Asp-462 serves as the catalytic 4-aspartylphosphate intermediate. Mg(2+) contacts are provided by Asp-651 and Asp-655. The next 2 membrane-spanning stretches (helical) occupy residues 657–677 (PALA…DVAI) and 716–736 (IITV…AVVL).

This sequence belongs to the cation transport ATPase (P-type) (TC 3.A.3) family. Type IB subfamily.

It localises to the cell membrane. The catalysed reaction is ATP + H2O = ADP + phosphate + H(+). The polypeptide is Probable cation-transporting ATPase G (ctpG) (Mycobacterium bovis (strain ATCC BAA-935 / AF2122/97)).